Here is a 536-residue protein sequence, read N- to C-terminus: Prickle planar cell polarity protein 3-B (536 aa).

The region spanning 66–175 is the PET domain; that stretch reads SGSQRDSLCD…CVRPISGTMS (110 aa). 3 consecutive LIM zinc-binding domains span residues 177 to 241, 242 to 302, and 305 to 366; these read TVCQ…ELKR, PRCL…LYAQ, and DSCG…HTKS. A disordered region spans residues 418–536; the sequence is PTQAAPARSL…KKKDKSCFLS (119 aa). Positions 438–448 are enriched in basic and acidic residues; sequence FSRECPNRRSL. The span at 450–467 shows a compositional bias: polar residues; sequence DLSSHTRTPTRVTFQLPS. The segment covering 474 to 487 has biased composition (low complexity); it reads SISFSRPSFTSSSS.

The protein belongs to the prickle / espinas / testin family. In terms of assembly, interacts with vangl2 via its C-terminus. The vangl2-dependent membrane recruitment of prickle3 is a prerequisite for its polarization. Interacts with wtip. Wtip is involved in the recruitment of prickle3 to the basal body.

Its subcellular location is the cytoplasm. It localises to the cell membrane. It is found in the mitochondrion. Its function is as follows. Involved in the planar cell polarity (PCP) pathway that is essential for the polarization of epithelial cells during morphogenetic processes, including gastrulation and neurulation. PCP is maintained by two molecular modules, the global and the core modules. Proteins of the core module include the proteins Frizzled (Fz), Disheveled (Dsh), Van Gogh (Vang), Prickle (Pk), Flamingo (Fmi, Celsr) and Diego (Dgo). The core module proteins develop subcellular asymmetry, accumulating in two groups on opposite sides of epithelial cells. Distinct proximal (Vang, Pk and Fmi) and distal (Fz, Dsh, Dgo and Fmi) complexes segregate to opposite sides of the cell, where they interact with the opposite complex in the neighboring cell at or near the adherents junctions. Directional information to orient polarization with respect to the tissue axes is provided by the global module which involves Wnt proteins. Involved in the organization of the basal body. Involved in cilia growth and positioning. Required for proper assembly, stability, and function of mitochondrial membrane ATP synthase (mitochondrial complex V). In Xenopus laevis (African clawed frog), this protein is Prickle planar cell polarity protein 3-B (prickle3-b).